A 159-amino-acid chain; its full sequence is Ribosomal RNA large subunit methyltransferase H (159 aa).

S-adenosyl-L-methionine is bound by residues L76, G108, and 127 to 132; that span reads MSKMTF.

The protein belongs to the RNA methyltransferase RlmH family. Homodimer.

The protein localises to the cytoplasm. The enzyme catalyses pseudouridine(1915) in 23S rRNA + S-adenosyl-L-methionine = N(3)-methylpseudouridine(1915) in 23S rRNA + S-adenosyl-L-homocysteine + H(+). In terms of biological role, specifically methylates the pseudouridine at position 1915 (m3Psi1915) in 23S rRNA. This Ureaplasma parvum serovar 3 (strain ATCC 27815 / 27 / NCTC 11736) protein is Ribosomal RNA large subunit methyltransferase H.